Here is a 150-residue protein sequence, read N- to C-terminus: Large ribosomal subunit protein bL17 (150 aa).

The tract at residues 126–150 (DRAKRREERLKAQREGRDHEEETDE) is disordered.

Belongs to the bacterial ribosomal protein bL17 family. As to quaternary structure, part of the 50S ribosomal subunit. Contacts protein L32.

This is Large ribosomal subunit protein bL17 from Solibacter usitatus (strain Ellin6076).